The chain runs to 326 residues: Peroxidase 39 (326 aa).

The N-terminal stretch at 1–23 (MTRFGLALLMILVIQGLVTFSEA) is a signal peptide. Cystine bridges form between Cys-34-Cys-114, Cys-67-Cys-72, Cys-120-Cys-322, and Cys-199-Cys-232. The active-site Proton acceptor is the His-65. Positions 66, 69, 71, 73, and 75 each coordinate Ca(2+). Asn-79 carries N-linked (GlcNAc...) asparagine glycosylation. Position 162 (Pro-162) interacts with substrate. N-linked (GlcNAc...) asparagine glycosylation occurs at Asn-167. His-192 serves as a coordination point for heme b. Thr-193 is a binding site for Ca(2+). Residues Asn-208 and Asn-238 are each glycosylated (N-linked (GlcNAc...) asparagine). Ca(2+)-binding residues include Asp-245, Ser-248, and Asp-253.

The protein belongs to the peroxidase family. Classical plant (class III) peroxidase subfamily. Heme b serves as cofactor. Requires Ca(2+) as cofactor. As to expression, slightly expressed in roots.

It localises to the secreted. The enzyme catalyses 2 a phenolic donor + H2O2 = 2 a phenolic radical donor + 2 H2O. In terms of biological role, removal of H(2)O(2), oxidation of toxic reductants, biosynthesis and degradation of lignin, suberization, auxin catabolism, response to environmental stresses such as wounding, pathogen attack and oxidative stress. These functions might be dependent on each isozyme/isoform in each plant tissue. This Arabidopsis thaliana (Mouse-ear cress) protein is Peroxidase 39 (PER39).